A 233-amino-acid chain; its full sequence is Large ribosomal subunit protein uL1 (233 aa).

It belongs to the universal ribosomal protein uL1 family. Part of the 50S ribosomal subunit.

Functionally, binds directly to 23S rRNA. The L1 stalk is quite mobile in the ribosome, and is involved in E site tRNA release. Protein L1 is also a translational repressor protein, it controls the translation of the L11 operon by binding to its mRNA. The sequence is that of Large ribosomal subunit protein uL1 from Shewanella pealeana (strain ATCC 700345 / ANG-SQ1).